A 292-amino-acid chain; its full sequence is MNTSDRIKSTQIALDRDLREQALLLLKEVRAVDGVDAFSEQFVRGLAEPGLGHSHLIVTLNDKLVGLAATDEETTELAVHPAHRRQGIGKALIDAAPTSSIWAHGNTAGAQALASTLRMKKTRELLVMEISDRALDGSAAYKDPDGITHSSLANAPVEKSVAEAKWLQSNNEAFDWHPEQGGWTTHRLAQAQKADWYKDSDVLFLWDGEEIVGFHWVKQHSPELQEIYVVGLSSAYRGRGLGDPLVRLGLHHMRAHGARKVILYVEADNTPAVAAYEKLGFTVAESHVVYEK.

N-acetyltransferase domains are found at residues 13–168 and 159–292; these read ALDR…KWLQ and KSVA…VYEK. E40 is a binding site for 1D-myo-inositol 2-(L-cysteinylamino)-2-deoxy-alpha-D-glucopyranoside. 77–79 contributes to the acetyl-CoA binding site; that stretch reads LAV. E179, K218, and E226 together coordinate 1D-myo-inositol 2-(L-cysteinylamino)-2-deoxy-alpha-D-glucopyranoside. Residues 230-232 and 237-243 each bind acetyl-CoA; these read VGL and RGRGLGD. Y264 serves as a coordination point for 1D-myo-inositol 2-(L-cysteinylamino)-2-deoxy-alpha-D-glucopyranoside.

It belongs to the acetyltransferase family. MshD subfamily. In terms of assembly, monomer.

The enzyme catalyses 1D-myo-inositol 2-(L-cysteinylamino)-2-deoxy-alpha-D-glucopyranoside + acetyl-CoA = mycothiol + CoA + H(+). Catalyzes the transfer of acetyl from acetyl-CoA to desacetylmycothiol (Cys-GlcN-Ins) to form mycothiol. This Corynebacterium glutamicum (strain R) protein is Mycothiol acetyltransferase.